A 1423-amino-acid chain; its full sequence is Protein phosphatase Slingshot homolog 2 (1423 aa).

2 disordered regions span residues 1 to 37 (MALV…PRSI) and 51 to 70 (LPRG…NKHA). Residues 9–18 (SPTPSTTSSP) show a composition bias toward low complexity. Phosphoserine is present on residues S17, S25, and S36. The region spanning 248–303 (ERTERLIKTKLREIMMQKDLENITSKEIRTELEMQMVCNLREFKEFIDNEMIVILG) is the DEK-C domain. The Tyrosine-protein phosphatase domain maps to 307–448 (SPTQIFEHVF…LEEYQGILLA (142 aa)). Catalysis depends on C392, which acts as the Phosphocysteine intermediate. 5 positions are modified to phosphoserine: S461, S487, S534, S631, and S633. Disordered regions lie at residues 698–725 (EMAA…DEDQ), 833–858 (HSST…MHSG), 878–950 (RQEQ…HCER), 967–991 (APQD…QRAV), 1021–1042 (SLGH…KQGL), 1074–1105 (PQVL…KGDC), and 1207–1226 (PEAC…DLSH). The segment covering 884–904 (HGTASAGPTLSNRKNSKNDSS) has biased composition (polar residues). Basic and acidic residues-rich tracts occupy residues 910–932 (PKWK…EPSK), 976–987 (SRSKKQEGDLKK), and 1033–1042 (PSKEGEKQGL). S1217 is modified (phosphoserine). At T1422 the chain carries Phosphothreonine.

This sequence belongs to the protein-tyrosine phosphatase family. In terms of assembly, interacts with filamentous actin. In terms of tissue distribution, expressed in brain, heart, liver, skeletal muscle, testis and thymus. Also expressed at lower levels in kidney, small intestine and spleen. Within testicular seminiferous tubules expressed in germ cells and spermatocytes, where it has a cytoplasmic localization, and round spermatids, where it concentrates in the acrosomal region next to the nucleus.

Its subcellular location is the cytoplasm. The protein resides in the cytoskeleton. It is found in the cell junction. The protein localises to the focal adhesion. It localises to the cytoplasmic vesicle. Its subcellular location is the secretory vesicle. The protein resides in the acrosome. The enzyme catalyses O-phospho-L-tyrosyl-[protein] + H2O = L-tyrosyl-[protein] + phosphate. The catalysed reaction is O-phospho-L-seryl-[protein] + H2O = L-seryl-[protein] + phosphate. It carries out the reaction O-phospho-L-threonyl-[protein] + H2O = L-threonyl-[protein] + phosphate. Protein phosphatase which regulates actin filament dynamics. Dephosphorylates and activates the actin binding/depolymerizing factor cofilin, which subsequently binds to actin filaments and stimulates their disassembly. Inhibitory phosphorylation of cofilin is mediated by LIMK1, which may also be dephosphorylated and inactivated by this protein. Required for spermatogenesis. Involved in acrosome biogenesis, probably by regulating cofilin-mediated actin cytoskeleton remodeling during proacrosomal vesicle fusion and/or Golgi to perinuclear vesicle trafficking. The chain is Protein phosphatase Slingshot homolog 2 (Ssh2) from Mus musculus (Mouse).